A 184-amino-acid chain; its full sequence is Lipid A acyltransferase PagP (184 aa).

A signal peptide spans 1-22 (MNIRHGIIAMSSTMLVPLAAEA). Catalysis depends on residues His57, Asp100, and Ser101.

It belongs to the lipid A palmitoyltransferase family. In terms of assembly, homodimer.

Its subcellular location is the cell outer membrane. The enzyme catalyses a lipid A + a 1,2-diacyl-sn-glycero-3-phosphocholine = a hepta-acyl lipid A + a 2-acyl-sn-glycero-3-phosphocholine. It catalyses the reaction a lipid IVA + a 1,2-diacyl-sn-glycero-3-phosphocholine = a lipid IVB + a 2-acyl-sn-glycero-3-phosphocholine. The catalysed reaction is a lipid IIA + a 1,2-diacyl-sn-glycero-3-phosphocholine = a lipid IIB + a 2-acyl-sn-glycero-3-phosphocholine. Transfers a fatty acid residue from the sn-1 position of a phospholipid to the N-linked hydroxyfatty acid chain on the proximal unit of lipid A or its precursors. The polypeptide is Lipid A acyltransferase PagP (Methylobacillus flagellatus (strain ATCC 51484 / DSM 6875 / VKM B-1610 / KT)).